The primary structure comprises 331 residues: Putative peptidyl-prolyl cis-trans isomerase RC0542 (331 aa).

The tract at residues 33–54 (EQTASNNSSTDENQTSINNEPP) is disordered. One can recognise a PPIase FKBP-type domain in the interval 128–226 (GHVVTVFYQI…SNEVKIYDDE (99 aa)).

The enzyme catalyses [protein]-peptidylproline (omega=180) = [protein]-peptidylproline (omega=0). This is Putative peptidyl-prolyl cis-trans isomerase RC0542 from Rickettsia conorii (strain ATCC VR-613 / Malish 7).